Here is a 400-residue protein sequence, read N- to C-terminus: Homoserine O-acetyltransferase (400 aa).

The interval 1–22 (MMNVHPVKGPVATGGERPHEAD) is disordered. In terms of domain architecture, AB hydrolase-1 spans 64–374 (NAILVCHALT…DKGHDAFLLD (311 aa)). Serine 169 (nucleophile) is an active-site residue. Position 239 (arginine 239) interacts with substrate. Catalysis depends on residues aspartate 335 and histidine 368. A substrate-binding site is contributed by aspartate 369.

The protein belongs to the AB hydrolase superfamily. MetX family. Homodimer.

The protein resides in the cytoplasm. It carries out the reaction L-homoserine + acetyl-CoA = O-acetyl-L-homoserine + CoA. The protein operates within amino-acid biosynthesis; L-methionine biosynthesis via de novo pathway; O-acetyl-L-homoserine from L-homoserine: step 1/1. Functionally, transfers an acetyl group from acetyl-CoA to L-homoserine, forming acetyl-L-homoserine. The chain is Homoserine O-acetyltransferase from Rhodopseudomonas palustris (strain HaA2).